A 192-amino-acid polypeptide reads, in one-letter code: Cytochrome b-245 light chain (192 aa).

Topologically, residues 2 to 7 (GQIEWA) are cytoplasmic. The chain crosses the membrane as a helical span at residues 8–30 (MWANEQALASGLILITGGIVATA). Residues 31–35 (GRFTQ) lie on the Extracellular side of the membrane. Residues 36-53 (WYFGAYSIVAGVLICLLE) traverse the membrane as a helical segment. The Cytoplasmic segment spans residues 54 to 69 (YPRGKRKKGSTMERCG). Residues 70–80 (QKYLTAVVKLF) lie within the membrane without spanning it. Residues 81 to 86 (GPLTRN) are Cytoplasmic-facing. The helical transmembrane segment at 87–104 (YYVRAVLHLLLSVPAGFL) threads the bilayer. Leucine 105 is a topological domain (extracellular). Residues 106 to 126 (ATILGTVCLAIASVIYLLAAI) form a helical membrane-spanning segment. The Cytoplasmic portion of the chain corresponds to 127–192 (RGEQWTPIEP…NPIPVTDEVV (66 aa)). A disordered region spans residues 134–192 (IEPKPKERPQVGGTIKQPPTNPPPRPPAEVRKKPSEAEEEAASAGGPQVNPIPVTDEVV). Threonine 147 carries the post-translational modification Phosphothreonine. A Glycyl lysine isopeptide (Lys-Gly) (interchain with G-Cter in ubiquitin) cross-link involves residue lysine 149. Phosphoserine occurs at positions 168 and 176.

This sequence belongs to the p22phox family. As to quaternary structure, component of the phagocyte NADPH oxidase core complex/cytochrome b558 complex, composed of CYBB (heavy chain (beta)) and CYBA (light chain (alpha)). Component of the phagocyte NADPH oxidase complex composed of an obligatory core heterodimer formed by the membrane proteins CYBA and CYBB and the cytosolic regulatory subunits NCF1/p47-phox, NCF2/p67-phox, NCF4/p40-phox and the small GTPase RAC1 or RAC2. Interacts with NCF1 (via SH3 domain). Interacts with SH3PXD2A. Interacts with DUOX1, DUOX2 and TPO. Interacts with NOX4; this interaction mediates superoxide generation. Interacts with calprotectin (S100A8/9). Interacts with GBP7. Interacts with NOXO1. Forms a heterodimer with NOX3 and is essential for activity and cell membrane localization of NOX3. Interacts with NOX1. Phosphorylation at Thr-147 enhances NADPH oxidase activity by promoting NCF1/p47-phox binding. Post-translationally, ubiquitinated at Lys-149 likely by RNF145. In terms of tissue distribution, expressed to a relatively high level in kidney, spleen, thymus and lung, and to a lower level in aorta, adrenals, and heart. Expression is not detected in liver or brain.

It localises to the cell membrane. Subunit of NADPH oxidase complexes that is required for the NADPH oxidase activity that generates, in various cell types, superoxide from molecular oxygen utilizing NADPH as an electron donor. Subunit of the phagocyte NADPH oxidase complex that mediates the transfer of electrons from cytosolic NADPH to O2 to produce the superoxide anion (O2(-)). In the activated complex, electrons are first transferred from NADPH to flavin adenine dinucleotide (FAD) and subsequently transferred via two heme molecules to molecular oxygen, producing superoxide through an outer-sphere reaction. Activation of the NADPH oxidase complex is initiated by the assembly of cytosolic subunits of the NADPH oxidase complex with the core NADPH oxidase complex to form a complex at the plasma membrane or phagosomal membrane. This activation process is initiated by phosphorylation dependent binding of the cytosolic NCF1/p47-phox subunit to the C-terminus of CYBA/p22-phox. Aassociates with NOX3 to form a functional NADPH oxidase constitutively generating superoxide. The protein is Cytochrome b-245 light chain of Rattus norvegicus (Rat).